Reading from the N-terminus, the 1253-residue chain is Cytoplasmic FMR1-interacting protein 1 (1253 aa).

A Phosphoserine modification is found at Ser583. The EIF4E-binding stretch occupies residues 724 to 732; the sequence is DKRLRSECK. A Phosphothreonine modification is found at Thr1234.

Belongs to the CYFIP family. As to quaternary structure, component of the WAVE1 complex composed of ABI2, CYFIP1 or CYFIP2, BRK1, NCKAP1 and WASF1/WAVE1. Within the complex, a heterodimer containing NCKAP1 and CYFIP1 interacts with a heterotrimer formed by WAVE1, ABI2 and BRK1. Component of the CYFIP1-EIF4E-FMR1 complex which is composed of CYFIP, EIF4E and FMR1. Interacts with FMR1 but does not bind to related proteins FXR1 or FXR2. Interaction with EIF4E stimulates FMR1 binding. Component of the WAVE2 complex composed of ABI1, CYFIP1/SRA1, NCKAP1/NAP1 (NCKAP1L/HEM1 in hematopoietic cells) and WASF2/WAVE2. Interacts with the active GTP-bound form of RAC1. Interacts through its C-terminus with the C-terminus of DPYSL2/CRMP2 which is necessary for DPYSL2-induced axon outgrowth. Interacts with NYAP1, NYAP2 and MYO16. Interacts with TMEM108 (via N-terminus); the interaction associates TMEM108 with the WAVE1 complex. As to expression, highly expressed in embryonic and adult developing nervous system.

The protein localises to the cytoplasm. It is found in the perinuclear region. Its subcellular location is the cell projection. The protein resides in the lamellipodium. It localises to the ruffle. The protein localises to the synapse. It is found in the synaptosome. In terms of biological role, component of the CYFIP1-EIF4E-FMR1 complex which binds to the mRNA cap and mediates translational repression. In the CYFIP1-EIF4E-FMR1 complex this subunit is an adapter between EIF4E and FMR1. Promotes the translation repression activity of FMR1 in brain probably by mediating its association with EIF4E and mRNA. Regulates formation of membrane ruffles and lamellipodia. Plays a role in axon outgrowth. Binds to F-actin but not to RNA. Part of the WAVE complex that regulates actin filament reorganization via its interaction with the Arp2/3 complex. Actin remodeling activity is regulated by RAC1. Regulator of epithelial morphogenesis. May act as an invasion suppressor in cancers. As component of the WAVE1 complex, required for BDNF-NTRK2 endocytic trafficking and signaling from early endosomes. This chain is Cytoplasmic FMR1-interacting protein 1, found in Mus musculus (Mouse).